Reading from the N-terminus, the 143-residue chain is Small ribosomal subunit protein uS12 (143 aa).

Basic residues predominate over residues 1–19 (MGKPRGLRTARKHVNHRRD). The tract at residues 1–23 (MGKPRGLRTARKHVNHRRDQRWA) is disordered. Proline 62 bears the 3-hydroxyproline mark.

The protein belongs to the universal ribosomal protein uS12 family. In terms of assembly, component of the 40S small ribosomal subunit. Post-translationally, hydroxylation at Pro-62 affects translation termination efficiency.

It is found in the cytoplasm. It localises to the cytosol. Its subcellular location is the rough endoplasmic reticulum. This chain is Small ribosomal subunit protein uS12 (RpS23), found in Drosophila melanogaster (Fruit fly).